The sequence spans 400 residues: Tryptophan synthase beta chain (400 aa).

Lysine 92 carries the post-translational modification N6-(pyridoxal phosphate)lysine.

It belongs to the TrpB family. In terms of assembly, tetramer of two alpha and two beta chains. The cofactor is pyridoxal 5'-phosphate.

The enzyme catalyses (1S,2R)-1-C-(indol-3-yl)glycerol 3-phosphate + L-serine = D-glyceraldehyde 3-phosphate + L-tryptophan + H2O. Its pathway is amino-acid biosynthesis; L-tryptophan biosynthesis; L-tryptophan from chorismate: step 5/5. Functionally, the beta subunit is responsible for the synthesis of L-tryptophan from indole and L-serine. In Leptospira borgpetersenii serovar Hardjo-bovis (strain JB197), this protein is Tryptophan synthase beta chain.